Consider the following 291-residue polypeptide: Nucleotide-binding protein CMM_1747 (291 aa).

Position 15-22 (Gly-15–Ser-22) interacts with ATP. Asp-66–Gly-69 is a GTP binding site.

The protein belongs to the RapZ-like family.

Its function is as follows. Displays ATPase and GTPase activities. The polypeptide is Nucleotide-binding protein CMM_1747 (Clavibacter michiganensis subsp. michiganensis (strain NCPPB 382)).